The sequence spans 158 residues: 3-hydroxyacyl-[acyl-carrier-protein] dehydratase FabZ (158 aa).

Histidine 60 is an active-site residue.

It belongs to the thioester dehydratase family. FabZ subfamily.

It localises to the cytoplasm. The enzyme catalyses a (3R)-hydroxyacyl-[ACP] = a (2E)-enoyl-[ACP] + H2O. Its function is as follows. Involved in unsaturated fatty acids biosynthesis. Catalyzes the dehydration of short chain beta-hydroxyacyl-ACPs and long chain saturated and unsaturated beta-hydroxyacyl-ACPs. This Zymomonas mobilis subsp. mobilis (strain ATCC 31821 / ZM4 / CP4) protein is 3-hydroxyacyl-[acyl-carrier-protein] dehydratase FabZ.